Consider the following 270-residue polypeptide: SURF1-like protein (270 aa).

Transmembrane regions (helical) follow at residues 7–29 (GFKL…VYRY) and 246–265 (YIGT…FRYM).

The protein belongs to the SURF1 family.

It localises to the mitochondrion inner membrane. Its function is as follows. Probably involved in the biogenesis of the COX complex. The protein is SURF1-like protein (surf1-1) of Dictyostelium discoideum (Social amoeba).